A 212-amino-acid polypeptide reads, in one-letter code: Adenylate kinase (212 aa).

10–15 contacts ATP; sequence GAGKGT. Residues 30–59 form an NMP region; that stretch reads STGDMFRAAMANQTEMGVLAKSYIDKGELV. Residues Thr31, Arg36, 57–59, 86–89, and Gln93 each bind AMP; these read ELV and GYPR. An LID region spans residues 127–159; the sequence is GRIIHRVTGETFHKVFNPPVDYKEEDYYQREDD. ATP is bound by residues Arg128 and 137 to 138; that span reads TF. AMP contacts are provided by Arg156 and Arg167. Residue Gln195 participates in ATP binding.

This sequence belongs to the adenylate kinase family. Monomer.

The protein resides in the cytoplasm. It carries out the reaction AMP + ATP = 2 ADP. The protein operates within purine metabolism; AMP biosynthesis via salvage pathway; AMP from ADP: step 1/1. In terms of biological role, catalyzes the reversible transfer of the terminal phosphate group between ATP and AMP. Plays an important role in cellular energy homeostasis and in adenine nucleotide metabolism. This is Adenylate kinase from Streptococcus pneumoniae serotype 4 (strain ATCC BAA-334 / TIGR4).